The primary structure comprises 350 residues: Probable DNA polymerase III subunit delta (350 aa).

It belongs to the DNA polymerase HolA subunit family. In terms of assembly, component of the DNA clamp loading complex consisting of tau(3):delta(1):delta'(1). The DNA polymerase III holoenzyme complex contains at least 10 different subunits organized into 3 functionally essential subassemblies: the Pol III core, the beta sliding clamp processivity factor and the clamp-loading complex. The Pol III core (subunits alpha, epsilon and theta) contains the polymerase and the 3'-5' exonuclease proofreading activities. The polymerase is tethered to the template via the dimeric beta sliding clamp processivity factor. The DNA clamp-loading complex assembles the beta sliding clamp onto the primed template and plays a central role in the organization and communication at the replication fork.

The enzyme catalyses DNA(n) + a 2'-deoxyribonucleoside 5'-triphosphate = DNA(n+1) + diphosphate. Its function is as follows. Part of the beta sliding clamp loading complex, which hydrolyzes ATP to load the beta clamp onto primed DNA to form the DNA replication pre-initiation complex. DNA polymerase III is a complex, multichain enzyme responsible for most of the replicative synthesis in bacteria. This DNA polymerase also exhibits 3'-5' exonuclease activity. The delta subunit is the wrench that will open the beta subunit dimer. The DNA clamp loading complex (tau(3),delta,delta') is thought to load beta dimers onto DNA by binding ATP which alters the complex's conformation so it can bind beta sliding clamp dimers and open them at one interface. Primed DNA is recognized, ATP is hydrolyzed releasing the clamp loading complex and closing the beta sliding clamp ring around the primed DNA. The polypeptide is Probable DNA polymerase III subunit delta (Aquifex aeolicus (strain VF5)).